A 388-amino-acid polypeptide reads, in one-letter code: Protein YnjB (388 aa).

Residues 333–357 (AVWGDPSVLDPQKLPDGQRESLQSR) form a disordered region.

This is Protein YnjB (ynjB) from Escherichia coli (strain K12).